Reading from the N-terminus, the 169-residue chain is Ribosome maturation factor RimM (169 aa).

A PRC barrel domain is found at 97-169 (EDEYYWTDLV…TITADWGLDY (73 aa)).

The protein belongs to the RimM family. In terms of assembly, binds ribosomal protein uS19.

It localises to the cytoplasm. In terms of biological role, an accessory protein needed during the final step in the assembly of 30S ribosomal subunit, possibly for assembly of the head region. Essential for efficient processing of 16S rRNA. May be needed both before and after RbfA during the maturation of 16S rRNA. It has affinity for free ribosomal 30S subunits but not for 70S ribosomes. The protein is Ribosome maturation factor RimM of Neisseria meningitidis serogroup B (strain ATCC BAA-335 / MC58).